Consider the following 360-residue polypeptide: 3-dehydroquinate synthase (360 aa).

Residues G105–D109, T129–T130, K142, K151, and T169–T172 contribute to the NAD(+) site. Residues E184, H247, and H263 each contribute to the Zn(2+) site.

This sequence belongs to the sugar phosphate cyclases superfamily. Dehydroquinate synthase family. Requires Co(2+) as cofactor. Zn(2+) is required as a cofactor. NAD(+) serves as cofactor.

The protein resides in the cytoplasm. It catalyses the reaction 7-phospho-2-dehydro-3-deoxy-D-arabino-heptonate = 3-dehydroquinate + phosphate. Its pathway is metabolic intermediate biosynthesis; chorismate biosynthesis; chorismate from D-erythrose 4-phosphate and phosphoenolpyruvate: step 2/7. Catalyzes the conversion of 3-deoxy-D-arabino-heptulosonate 7-phosphate (DAHP) to dehydroquinate (DHQ). The sequence is that of 3-dehydroquinate synthase from Acetivibrio thermocellus (strain ATCC 27405 / DSM 1237 / JCM 9322 / NBRC 103400 / NCIMB 10682 / NRRL B-4536 / VPI 7372) (Clostridium thermocellum).